A 560-amino-acid polypeptide reads, in one-letter code: Mitogen-activated protein kinase kinase kinase 3 (560 aa).

The segment at 70-91 (KRQSSSSSDNTSDKEEVETEET) is disordered. Residues 303 to 557 (WLKGQLLGRG…AAELLHHPFV (255 aa)) form the Protein kinase domain. Residues 309 to 317 (LGRGSYASV) and Lys-331 each bind ATP. Asp-426 (proton acceptor) is an active-site residue.

This sequence belongs to the protein kinase superfamily. STE Ser/Thr protein kinase family. MAP kinase kinase kinase subfamily. In terms of tissue distribution, expressed at low levels in roots, stems, siliques, leaves, seedlings and flower buds.

It carries out the reaction L-seryl-[protein] + ATP = O-phospho-L-seryl-[protein] + ADP + H(+). The catalysed reaction is L-threonyl-[protein] + ATP = O-phospho-L-threonyl-[protein] + ADP + H(+). The polypeptide is Mitogen-activated protein kinase kinase kinase 3 (Arabidopsis thaliana (Mouse-ear cress)).